A 1101-amino-acid polypeptide reads, in one-letter code: Translation initiation factor IF-2 (1101 aa).

Disordered regions lie at residues 81–437 (QEIL…EDDF) and 452–509 (SIST…QRAE). Over residues 93 to 108 (PFSSTDAPVGSGQSSP) the composition is skewed to polar residues. Pro residues predominate over residues 110 to 124 (IEPPRPPMKPQPPSP). 2 stretches are compositionally biased toward polar residues: residues 128–149 (EVTSPITDEPVSTQEDTNGSSS) and 157–184 (SPMSPFDQQQPEQNTTDHNQEQQNQLKY). The segment covering 185–196 (NQEQSNQLEQES) has biased composition (low complexity). The span at 197 to 206 (AISSELSEVN) shows a compositional bias: polar residues. Composition is skewed to basic and acidic residues over residues 228–237 (SKEKEAKSNE), 248–288 (KENK…DKKS), and 295–340 (VKRE…ELKR). Acidic residues predominate over residues 361–378 (EPEDVEDTAEDLLEEDPL). 2 stretches are compositionally biased toward basic residues: residues 385 to 397 (PKLKRPTPPKVGK) and 414 to 428 (KAGKAAKAGKNKRRQ). Positions 484–506 (EPGRGKSAERERSERKDRKEQPQ) are enriched in basic and acidic residues. The tr-type G domain occupies 592 to 765 (RRPPVVTIMG…LLVAEVGELS (174 aa)). The G1 stretch occupies residues 601–608 (GHVDHGKT). 601–608 (GHVDHGKT) lines the GTP pocket. Positions 626 to 630 (GITQH) are G2. Residues 651 to 654 (DTPG) form a G3 region. Residues 651 to 655 (DTPGH) and 705 to 708 (NKID) contribute to the GTP site. Positions 705 to 708 (NKID) are G4. Residues 741 to 743 (SAL) form a G5 region.

This sequence belongs to the TRAFAC class translation factor GTPase superfamily. Classic translation factor GTPase family. IF-2 subfamily.

Its subcellular location is the cytoplasm. In terms of biological role, one of the essential components for the initiation of protein synthesis. Protects formylmethionyl-tRNA from spontaneous hydrolysis and promotes its binding to the 30S ribosomal subunits. Also involved in the hydrolysis of GTP during the formation of the 70S ribosomal complex. The sequence is that of Translation initiation factor IF-2 from Gloeothece citriformis (strain PCC 7424) (Cyanothece sp. (strain PCC 7424)).